The sequence spans 1516 residues: Mediator of RNA polymerase II transcription subunit 14 (1516 aa).

Disordered stretches follow at residues 22–98 and 1434–1516; these read LSSQ…EVPA and MHRQ…YPPQ. Residues 34–47 show a composition bias toward low complexity; that stretch reads SPAAPISPAPSGSA. The segment covering 72–83 has biased composition (basic and acidic residues); it reads SEVDVKSIHSSD. Residues 1463–1473 show a composition bias toward low complexity; that stretch reads SHQQHMMNPGS. Residues 1474–1483 are compositionally biased toward gly residues; that stretch reads VGPGSVGGPG. A compositionally biased stretch (low complexity) spans 1502 to 1516; sequence QSYHHPLHHQQYPPQ.

It belongs to the Mediator complex subunit 14 family. Component of the Mediator complex.

The protein localises to the nucleus. Functionally, component of the Mediator complex, a coactivator involved in the regulated transcription of nearly all RNA polymerase II-dependent genes. Mediator functions as a bridge to convey information from gene-specific regulatory proteins to the basal RNA polymerase II transcription machinery. Mediator is recruited to promoters by direct interactions with regulatory proteins and serves as a scaffold for the assembly of a functional preinitiation complex with RNA polymerase II and the general transcription factors. Required for transcription in the embryo and for phosphorylation of the RNA polymerase II C-terminal domain repeat. This chain is Mediator of RNA polymerase II transcription subunit 14 (rgr-1), found in Caenorhabditis elegans.